Here is a 105-residue protein sequence, read N- to C-terminus: Large ribosomal subunit protein uL24 (105 aa).

The protein belongs to the universal ribosomal protein uL24 family. In terms of assembly, part of the 50S ribosomal subunit.

Its function is as follows. One of two assembly initiator proteins, it binds directly to the 5'-end of the 23S rRNA, where it nucleates assembly of the 50S subunit. Functionally, one of the proteins that surrounds the polypeptide exit tunnel on the outside of the subunit. The sequence is that of Large ribosomal subunit protein uL24 from Aliivibrio salmonicida (strain LFI1238) (Vibrio salmonicida (strain LFI1238)).